The sequence spans 291 residues: MSKMDKLAKFEKFDLFFAAIACICGILKVMEMGKEGYPTLGTVSKNGMAVLAVLVALGFLLKYADQMCRRITSHSFSEKGGFLNPCVILSVIEFFMMLICIKAMLFYPAEIPGVDDSSQMEPPISSKFGLFGAIFMPYIFAECIRLLLANKNSRRDRVILGILVLGCLAMAGLAYLEYKGKGNFISAGILGVGLSMLLSRLALVDEDEEDTLLDDSAEGGNVWMYLAMFASFTLVLILLARSHRILFDNLSFLDSLKSFTFLGRKVSQMASEDPPKDPLPRQEGGGGDTIA.

The next 6 helical transmembrane spans lie at 13 to 33 (FDLF…MEMG), 40 to 60 (LGTV…LGFL), 81 to 101 (GFLN…LICI), 128 to 148 (FGLF…RLLL), 158 to 178 (VILG…YLEY), and 220 to 240 (GNVW…ILLA). The N-linked (GlcNAc...) asparagine glycan is linked to Asn-249. Residues 269–291 (MASEDPPKDPLPRQEGGGGDTIA) form a disordered region.

The protein resides in the membrane. This is an uncharacterized protein from Encephalitozoon cuniculi (strain GB-M1) (Microsporidian parasite).